Reading from the N-terminus, the 426-residue chain is Fatty alcohol:caffeoyl-CoA acyltransferase (426 aa).

Residues H162 and D374 each act as proton acceptor in the active site.

Belongs to the plant acyltransferase family. As to expression, expressed in the outermost circumference of mature roots, the endodermis of young roots and in the seed coat of developing seeds. Expressed in outer integument layer 1 of the seed coat.

Its function is as follows. Involved in the synthesis of alkyl hydroxycinnamates in root waxes. Functions as a fatty alcohol:hydroxy cinnamoyl-CoA acyltransferase with apparent preference for caffeoyl-CoA. This is Fatty alcohol:caffeoyl-CoA acyltransferase from Arabidopsis thaliana (Mouse-ear cress).